Here is a 221-residue protein sequence, read N- to C-terminus: Phosphoglycolate phosphatase (221 aa).

Catalysis depends on Asp7, which acts as the Nucleophile. Residues Asp7 and Asp9 each contribute to the Mg(2+) site. Lys148 provides a ligand contact to substrate. Mg(2+) is bound by residues Asp171 and Asp175.

Belongs to the archaeal SPP-like hydrolase family. It depends on Mg(2+) as a cofactor.

The enzyme catalyses 2-phosphoglycolate + H2O = glycolate + phosphate. In terms of biological role, catalyzes the dephosphorylation of 2-phosphoglycolate. The protein is Phosphoglycolate phosphatase of Methanothermobacter thermautotrophicus (strain ATCC 29096 / DSM 1053 / JCM 10044 / NBRC 100330 / Delta H) (Methanobacterium thermoautotrophicum).